We begin with the raw amino-acid sequence, 694 residues long: Glycine--tRNA ligase beta subunit (694 aa).

It belongs to the class-II aminoacyl-tRNA synthetase family. In terms of assembly, tetramer of two alpha and two beta subunits.

It localises to the cytoplasm. The catalysed reaction is tRNA(Gly) + glycine + ATP = glycyl-tRNA(Gly) + AMP + diphosphate. This is Glycine--tRNA ligase beta subunit from Shewanella denitrificans (strain OS217 / ATCC BAA-1090 / DSM 15013).